The sequence spans 1034 residues: Potassium-transporting ATPase alpha chain 1 (1034 aa).

The Cytoplasmic segment spans residues 1–97 (MGKAENYEMY…NALRPPRGTP (97 aa)). Tyr7 and Tyr10 each carry phosphotyrosine. The tract at residues 14 to 41 (LGPGPGGDMAAKMSKKKAGKGGGKKKEK) is disordered. Basic residues predominate over residues 26–39 (MSKKKAGKGGGKKK). Ser27 carries the post-translational modification Phosphoserine. A helical membrane pass occupies residues 98 to 118 (EYVKFARQLAGGLQCLMWVAA). The Lumenal segment spans residues 119-141 (AICLIAFAIQASEGDLTTDDNLY). Residues 142–162 (LALALIAVVVVTGCFGYYQEF) form a helical membrane-spanning segment. At 163–298 (KSTNIIASFK…NEKTPIAIEI (136 aa)) the chain is on the cytoplasmic side. Polar residues predominate over residues 225-239 (NSSLTGESEPQTRSP). The disordered stretch occupies residues 225 to 245 (NSSLTGESEPQTRSPECTHES). Residues 299 to 318 (EHFVDIIAGLAILFGATFFV) traverse the membrane as a helical segment. Topologically, residues 319–330 (VAMCIGYTFLRA) are lumenal. A helical transmembrane segment spans residues 331–348 (MVFFMAIVVAYVPEGLLA). Residues Val339, Ala340, Val342, and Glu344 each coordinate K(+). At 349-782 (TVTVCLSLTA…EQGRLIFDNL (434 aa)) the chain is on the cytoplasmic side. Asp386 acts as the 4-aspartylphosphate intermediate in catalysis. The Mg(2+) site is built by Asp386 and Thr388. Phosphoserine occurs at positions 462 and 600. The Mg(2+) site is built by Asp727 and Asp731. A helical transmembrane segment spans residues 783–802 (KKSIAYTLTKNIPELTPYLI). Glu796 contacts K(+). At 803-812 (YITVSVPLPL) the chain is on the lumenal side. A helical transmembrane segment spans residues 813-833 (GCITILFIELCTDIFPSVSLA). Glu821 lines the K(+) pocket. At 834–853 (YEKAESDIMHLRPRNPKRDR) the chain is on the cytoplasmic side. Ser839 bears the Phosphoserine mark. Residues 854–876 (LVNEPLAAYSYFQIGAIQSFAGF) traverse the membrane as a helical segment. Topologically, residues 877 to 928 (TDYFTAMAQEGWFPLLCVGLRPYWENHHLQDLQDSYGQEWTFGQRLYQQYTC) are lumenal. The chain crosses the membrane as a helical span at residues 929–948 (YTVFFISIEMCQIADVLIRK). The Cytoplasmic portion of the chain corresponds to 949 to 962 (TRRLSAFQQGFFRN). Phosphoserine; by PKA is present on Ser953. Residues 963-981 (RILVIAIVFQVCIGCFLCY) traverse the membrane as a helical segment. Over 982–996 (CPGMPNIFNFMPIRY) the chain is Lumenal. The helical transmembrane segment at 997–1017 (QWWLVPMPFGLLIFVYDEIRK) threads the bilayer. The Cytoplasmic portion of the chain corresponds to 1018-1034 (LGVRCCPGSWWDQELYY).

The protein belongs to the cation transport ATPase (P-type) (TC 3.A.3) family. Type IIC subfamily. In terms of assembly, the gastric H(+)/K(+) ATPase pump is composed of the catalytic alpha subunit ATP4A and the regulatory beta subunit ATP4B. Interacts (via the P-domain) with ATP4B (via N-terminus); this interaction stabilizes the lumenal-open E2 conformation state and prevents the reverse reaction of the transport cycle.

The protein localises to the apical cell membrane. The catalysed reaction is K(+)(out) + ATP + H2O + H(+)(in) = K(+)(in) + ADP + phosphate + 2 H(+)(out). The catalytic subunit of the gastric H(+)/K(+) ATPase pump which transports H(+) ions in exchange for K(+) ions across the apical membrane of parietal cells. Uses ATP as an energy source to pump H(+) ions to the gastric lumen while transporting K(+) ion from the lumen into the cell. Remarkably generates a million-fold proton gradient across the gastric parietal cell membrane, acidifying the gastric juice down to pH 1. Within a transport cycle, the transfer of a H(+) ion across the membrane is coupled to ATP hydrolysis and is associated with a transient phosphorylation that shifts the pump conformation from inward-facing (E1) to outward-facing state (E2). The release of the H(+) ion in the stomach lumen is followed by binding of K(+) ion converting the pump conformation back to the E1 state. This Canis lupus familiaris (Dog) protein is Potassium-transporting ATPase alpha chain 1 (ATP4A).